The primary structure comprises 111 residues: Small ribosomal subunit protein bS16 (111 aa).

It belongs to the bacterial ribosomal protein bS16 family.

The polypeptide is Small ribosomal subunit protein bS16 (Rickettsia prowazekii (strain Madrid E)).